We begin with the raw amino-acid sequence, 385 residues long: NADH-quinone oxidoreductase subunit H (385 aa).

The next 8 membrane-spanning stretches (helical) occupy residues 14-34 (GLKLVVIFLMMVQAVPILVWL), 80-100 (FLYYAAPIFALIPGAVAFSAI), 130-150 (IGVGIVFILGVSSLAAYTLLM), 172-192 (ISYELALGLSIVGVIMLYGTF), 219-239 (LPNWGIFYQPVGALLFFSAAF), 280-300 (MMIASGLMVLFFFGGYTIPYV), 325-345 (LIHFLVFNIKFGFFMWVFIWV), and 365-385 (MLPWALANTIITAFVIYIASL).

The protein belongs to the complex I subunit 1 family. As to quaternary structure, NDH-1 is composed of 14 different subunits. Subunits NuoA, H, J, K, L, M, N constitute the membrane sector of the complex.

It localises to the cell inner membrane. It carries out the reaction a quinone + NADH + 5 H(+)(in) = a quinol + NAD(+) + 4 H(+)(out). Functionally, NDH-1 shuttles electrons from NADH, via FMN and iron-sulfur (Fe-S) centers, to quinones in the respiratory chain. The immediate electron acceptor for the enzyme in this species is believed to be ubiquinone. Couples the redox reaction to proton translocation (for every two electrons transferred, four hydrogen ions are translocated across the cytoplasmic membrane), and thus conserves the redox energy in a proton gradient. This subunit may bind ubiquinone. The protein is NADH-quinone oxidoreductase subunit H of Bdellovibrio bacteriovorus (strain ATCC 15356 / DSM 50701 / NCIMB 9529 / HD100).